Consider the following 75-residue polypeptide: Protein TM_1420 (75 aa).

The [2Fe-2S] cluster site is built by Cys-6, Cys-11, Cys-39, and Cys-43.

Requires [2Fe-2S] cluster as cofactor.

Functionally, might be part of a multi-protein complex, possibly involved in metal cluster assembly. In Thermotoga maritima (strain ATCC 43589 / DSM 3109 / JCM 10099 / NBRC 100826 / MSB8), this protein is Protein TM_1420.